We begin with the raw amino-acid sequence, 161 residues long: Large ribosomal subunit protein bL17 (161 aa).

Positions 126–161 (KVAKKATRTRRSKKTTEAAPAAEVPATEEPKAESAE) are disordered. Residues 129–138 (KKATRTRRSK) are compositionally biased toward basic residues. Residues 142 to 152 (EAAPAAEVPAT) show a composition bias toward low complexity.

This sequence belongs to the bacterial ribosomal protein bL17 family. In terms of assembly, part of the 50S ribosomal subunit. Contacts protein L32.

In Bacteroides fragilis (strain ATCC 25285 / DSM 2151 / CCUG 4856 / JCM 11019 / LMG 10263 / NCTC 9343 / Onslow / VPI 2553 / EN-2), this protein is Large ribosomal subunit protein bL17.